A 291-amino-acid polypeptide reads, in one-letter code: Beta-lactamase CTX-M-4 (291 aa).

Residues 1–28 (MMTQSIRRSMLTVMATLPLLFSSATLHA) form the signal peptide. The active-site Acyl-ester intermediate is the serine 73. Substrate is bound at residue 237–239 (KTG).

It belongs to the class-A beta-lactamase family.

It catalyses the reaction a beta-lactam + H2O = a substituted beta-amino acid. Has cefotaxime-hydrolyzing activity. The chain is Beta-lactamase CTX-M-4 (bla) from Salmonella typhimurium.